The following is a 352-amino-acid chain: Rhodopsin, freshwater form (352 aa).

Residues 1–36 lie on the Extracellular side of the membrane; that stretch reads MNGTEGPNFYVPMSNVTGVVRSPFEYPQYYLAEPWA. 2 N-linked (GlcNAc...) asparagine glycosylation sites follow: asparagine 2 and asparagine 15. A helical transmembrane segment spans residues 37-61; it reads YSALAAYMFFLIIAGFPINFLTLYV. At 62–73 the chain is on the cytoplasmic side; that stretch reads TIEHKKLRTPLN. A helical transmembrane segment spans residues 74 to 98; it reads YILLNLAVADLFMVFGGFTTTMYTS. Residues 99 to 113 are Extracellular-facing; the sequence is MHGYFVFGPTGCNIE. Cysteine 110 and cysteine 187 are joined by a disulfide. A helical transmembrane segment spans residues 114 to 133; it reads GFFATLGGEIALWCLVVLAV. Residues 134–152 are Cytoplasmic-facing; that stretch reads ERWMVVCKPMSNFRFGENH. Residues 153 to 176 form a helical membrane-spanning segment; it reads AIMGVAFTWVMALACAAPPLFGWS. Topologically, residues 177–202 are extracellular; that stretch reads RYIPEGMQCSCGMDHYAPNPETYNES. Asparagine 200 carries N-linked (GlcNAc...) asparagine glycosylation. Residues 203 to 230 form a helical membrane-spanning segment; sequence FVIYMFICHFTIPLTVISFCYGRLVCTV. Over 231–252 the chain is Cytoplasmic; the sequence is KEATAQQQESETTQRAEREVTR. The chain crosses the membrane as a helical span at residues 253 to 276; the sequence is MVIIMVISFLVCWVPYASVAWYIF. Residues 277–284 are Extracellular-facing; sequence THQGSSFG. The chain crosses the membrane as a helical span at residues 285 to 309; that stretch reads PIFMTIPAFFAKSSSLYNPLIYICM. The residue at position 296 (lysine 296) is an N6-(retinylidene)lysine. Residues 310–352 are Cytoplasmic-facing; it reads NKQSRNCMITTLCCGKNPFEEEEGASTTASKTEASSVSSVSPA. Residue cysteine 323 is the site of S-palmitoyl cysteine attachment. Residues 330–352 form a disordered region; sequence EEEGASTTASKTEASSVSSVSPA. The segment covering 334-352 has biased composition (low complexity); it reads ASTTASKTEASSVSSVSPA.

It belongs to the G-protein coupled receptor 1 family. Opsin subfamily. In terms of processing, phosphorylated on some or all of the serine and threonine residues present in the C-terminal region. As to expression, rod shaped photoreceptor cells which mediates vision in dim light.

It localises to the membrane. In terms of biological role, visual pigments such as rhodopsin and porphyropsin are light-absorbing molecules that mediate vision. Rhodopsin consists of an apoprotein, opsin, covalently linked to 11-cis-retinal. This receptor is coupled to the activation of phospholipase C. Porphyropsin consists of opsin covalently linked to 11-cis 3,4-didehydroretinal. The chain is Rhodopsin, freshwater form from Anguilla anguilla (European freshwater eel).